Reading from the N-terminus, the 522-residue chain is 2-isopropylmalate synthase (522 aa).

Residues 5 to 267 (VIIFDTTLRD…ETGINAKEIH (263 aa)) form the Pyruvate carboxyltransferase domain. Mn(2+) contacts are provided by Asp14, His202, His204, and Asn238. The regulatory domain stretch occupies residues 392–522 (QLQQLVVQSD…MHKNRELGGV (131 aa)).

The protein belongs to the alpha-IPM synthase/homocitrate synthase family. LeuA type 1 subfamily. Homodimer. Mn(2+) serves as cofactor.

The protein resides in the cytoplasm. It carries out the reaction 3-methyl-2-oxobutanoate + acetyl-CoA + H2O = (2S)-2-isopropylmalate + CoA + H(+). The protein operates within amino-acid biosynthesis; L-leucine biosynthesis; L-leucine from 3-methyl-2-oxobutanoate: step 1/4. In terms of biological role, catalyzes the condensation of the acetyl group of acetyl-CoA with 3-methyl-2-oxobutanoate (2-ketoisovalerate) to form 3-carboxy-3-hydroxy-4-methylpentanoate (2-isopropylmalate). The polypeptide is 2-isopropylmalate synthase (Shewanella sp. (strain MR-7)).